We begin with the raw amino-acid sequence, 389 residues long: Mannitol-1-phosphate 5-dehydrogenase (389 aa).

NAD(+) is bound at residue 5 to 16; sequence AIQFGGGNIGRG. The active site involves Lys214.

This sequence belongs to the mannitol dehydrogenase family. As to quaternary structure, monomer.

It carries out the reaction D-mannitol 1-phosphate + NAD(+) = beta-D-fructose 6-phosphate + NADH + H(+). Its function is as follows. Catalyzes the NAD(H)-dependent interconversion of D-fructose 6-phosphate and D-mannitol 1-phosphate in the mannitol metabolic pathway. The polypeptide is Mannitol-1-phosphate 5-dehydrogenase (Talaromyces marneffei (strain ATCC 18224 / CBS 334.59 / QM 7333) (Penicillium marneffei)).